Here is a 194-residue protein sequence, read N- to C-terminus: Small ribosomal subunit protein eS7 (194 aa).

The protein belongs to the eukaryotic ribosomal protein eS7 family.

This is Small ribosomal subunit protein eS7 (RpS7) from Drosophila melanogaster (Fruit fly).